Consider the following 926-residue polypeptide: OTU domain-containing protein 7A (926 aa).

Residues 75–99 (PHVFNEGRGPKQPEREPQPGHKVER) are disordered. Residues 82-99 (RGPKQPEREPQPGHKVER) show a composition bias toward basic and acidic residues. S119 is subject to Phosphoserine. The segment at 168-410 (ERDLIEQATM…AVDPGKDWEW (243 aa)) is TRAF-binding. A catalytic region spans residues 183–449 (AGRLNWWSTV…VTWIRIPSET (267 aa)). Positions 199 to 374 (LLPLATTGDG…QAHFSALVSM (176 aa)) constitute an OTU domain. D207 is an active-site residue. C210 functions as the Nucleophile in the catalytic mechanism. H367 serves as the catalytic Proton acceptor. 3 disordered regions span residues 452–514 (PLAQ…DSVA), 537–613 (GLVH…DAWK), and 668–768 (EQEQ…APAR). The span at 481–491 (VCSNSNSNNGK) shows a compositional bias: low complexity. The segment covering 492-510 (NGKDKEKEKQRKEKDKTRA) has biased composition (basic and acidic residues). A Nuclear localization signal motif is present at residues 494 to 509 (KDKEKEKQRKEKDKTR). Composition is skewed to low complexity over residues 576-592 (GASA…PSPT), 677-691 (ATAA…AATA), and 729-742 (PAAG…AGGT). An Omega-N-methylarginine modification is found at R880. The A20-type zinc-finger motif lies at 884–919 (GPVQRRCQRENCAFYGRAETEHYCSYCYREELRRRR). Zn(2+) is bound by residues C890, C895, C907, and C910.

Belongs to the peptidase C64 family.

Its subcellular location is the cytoplasm. The protein resides in the nucleus. The catalysed reaction is Thiol-dependent hydrolysis of ester, thioester, amide, peptide and isopeptide bonds formed by the C-terminal Gly of ubiquitin (a 76-residue protein attached to proteins as an intracellular targeting signal).. Its function is as follows. Deubiquitinase, which cleaves 'Lys-11'-linked polyubiquitin chains. Might be required for PA28-20S proteasome assembly. The chain is OTU domain-containing protein 7A (OTUD7A) from Homo sapiens (Human).